The primary structure comprises 218 residues: Riboflavin synthase (218 aa).

Lumazine-binding repeat units follow at residues 1 to 97 and 98 to 194; these read MFTG…FGGH and IVSG…ERLL. 2,4-dihydroxypteridine-binding positions include 4-6, 48-50, 62-67, 101-103, Lys-136, 145-147, and 159-164; these read GII, CLT, DLSIET, GHV, SLT, and TIVPHT.

In terms of assembly, homotrimer.

The enzyme catalyses 2 6,7-dimethyl-8-(1-D-ribityl)lumazine + H(+) = 5-amino-6-(D-ribitylamino)uracil + riboflavin. It functions in the pathway cofactor biosynthesis; riboflavin biosynthesis; riboflavin from 2-hydroxy-3-oxobutyl phosphate and 5-amino-6-(D-ribitylamino)uracil: step 2/2. Its function is as follows. Catalyzes the dismutation of two molecules of 6,7-dimethyl-8-ribityllumazine, resulting in the formation of riboflavin and 5-amino-6-(D-ribitylamino)uracil. The chain is Riboflavin synthase from Photobacterium phosphoreum.